The chain runs to 274 residues: Thiamine kinase (274 aa).

The protein belongs to the thiamine kinase family.

It carries out the reaction thiamine + ATP = thiamine phosphate + ADP + H(+). It functions in the pathway cofactor biosynthesis; thiamine diphosphate biosynthesis; thiamine phosphate from thiamine: step 1/1. Its function is as follows. Catalyzes the ATP-dependent phosphorylation of thiamine to thiamine phosphate. Is involved in thiamine salvage. The chain is Thiamine kinase from Salmonella choleraesuis (strain SC-B67).